Reading from the N-terminus, the 219-residue chain is Ras-related protein Rab-3D (219 aa).

Ala2 is modified (N-acetylalanine). 29-37 (GNSSVGKTS) provides a ligand contact to GDP. GTP-binding residues include Ser31, Ser32, Val33, Gly34, Lys35, Thr36, Ser37, Pro49, and Ser53. Position 36 (Thr36) interacts with Mg(2+). Residues 49-58 (PAFVSTVGID) carry the Switch 1 motif. Positions 54 and 77 each coordinate Mg(2+). Gly80 contacts GTP. The Switch 2 motif lies at 80–96 (GQERYRTITTAYYRGAM). Thr86 carries the phosphothreonine; by LRRK2 modification. GTP-binding residues include Asn135, Lys136, Asp138, Ala166, and Lys167. GDP is bound by residues 135 to 138 (NKCD) and 165 to 167 (SAK). Ser190 is modified (phosphoserine). Residues 190–199 (SLEPSSSSGS) are compositionally biased toward low complexity. A disordered region spans residues 190-219 (SLEPSSSSGSNGKGPAVGDAPAPQPSSCSC). Residues Cys217 and Cys219 are each lipidated (S-geranylgeranyl cysteine). Cysteine methyl ester is present on Cys219.

Belongs to the small GTPase superfamily. Rab family. In terms of assembly, interacts with RIMS1, RIMS2, RPH3A, RPH3AL and RAB3IP. The GTP-bound form interacts with REP15. Interacts with CHM and CHML; phosphorylation at Thr-86 disrupts these interactions. Interacts with MADD (via uDENN domain); the GTP-bound form is preferred for interaction. The cofactor is Mg(2+). Post-translationally, phosphorylation of Thr-86 in the switch II region by LRRK2 prevents the association of RAB regulatory proteins, including CHM and CHML. As to expression, highly expressed in granulocytes of peripheral blood. Constitutively expressed at low levels in all hematopoietic cell lines investigated.

The protein localises to the cell membrane. It catalyses the reaction GTP + H2O = GDP + phosphate + H(+). Its activity is regulated as follows. Regulated by guanine nucleotide exchange factors (GEFs) which promote the exchange of bound GDP for free GTP. Regulated by GTPase activating proteins (GAPs) which increase the GTP hydrolysis activity. Inhibited by GDP dissociation inhibitors (GDIs) which prevent Rab-GDP dissociation. Functionally, the small GTPases Rab are key regulators of intracellular membrane trafficking, from the formation of transport vesicles to their fusion with membranes. Rabs cycle between an inactive GDP-bound form and an active GTP-bound form that is able to recruit to membranes different sets of downstream effectors directly responsible for vesicle formation, movement, tethering and fusion. RAB3D may be involved in the insulin-induced exocytosis of GLUT4-containing vesicles in adipocytes. This chain is Ras-related protein Rab-3D, found in Homo sapiens (Human).